Consider the following 310-residue polypeptide: MRNRLLSLVTLFLSLSVATAVSASPPPKAGLPLQQELASGSALVTDQNTGKVLYSRNPDLVVPIASITKLMTAMVVLDSKLPLDEVLPIAISETSEMRGVFSRVRVGSQISRRDMLLLALMSSENRAAASLAQNYPGGKNAFVKAMNAKAHALGMKNTRYVEPTGLSLHNVSTARDLTRLLVASRQYPLLSQWSTTPEKTVAFRHPNYTLGFRNTNHLINNKTWNIQLTKTGFTNEAGHCLVMRTTINRSPVNLVVLDAFGKYTHFADATRLRRWLETGQVTAIPAAAKAYRLQRDRERGLGQPVAQAVR.

Positions 1 to 23 are cleaved as a signal peptide; the sequence is MRNRLLSLVTLFLSLSVATAVSA. Residue Ser-66 is the Acyl-ester intermediate of the active site. Residue Lys-69 is the Proton acceptor of the active site. Ser-123 is an active-site residue. Residue Lys-230 participates in substrate binding.

It belongs to the peptidase S11 family.

Its subcellular location is the periplasm. Cell wall formation. The protein is D-alanyl-D-alanine endopeptidase (pbpG) of Pseudomonas aeruginosa (strain ATCC 15692 / DSM 22644 / CIP 104116 / JCM 14847 / LMG 12228 / 1C / PRS 101 / PAO1).